Consider the following 103-residue polypeptide: Small ribosomal subunit protein uS10 (103 aa).

The protein belongs to the universal ribosomal protein uS10 family. In terms of assembly, part of the 30S ribosomal subunit.

In terms of biological role, involved in the binding of tRNA to the ribosomes. The chain is Small ribosomal subunit protein uS10 from Colwellia psychrerythraea (strain 34H / ATCC BAA-681) (Vibrio psychroerythus).